The following is a 621-amino-acid chain: C4-dicarboxylate transport sensor protein DctB (621 aa).

At 1-26 the chain is on the cytoplasmic side; it reads MHHVRMVKLPAEASDPHALRSRARRS. A helical transmembrane segment spans residues 27-45; the sequence is WLVFAAVALVLLAAGLLLA. Residues 46-320 lie on the Periplasmic side of the membrane; the sequence is RDYGRSQALA…PLAAGAREAQ (275 aa). A helical membrane pass occupies residues 321–338; that stretch reads LLTLAALVPLLALAALLL. At 339–621 the chain is on the cytoplasmic side; that stretch reads RRRQVVAMRS…TTFAVNLKKA (283 aa). The Histidine kinase domain occupies 412 to 621; that stretch reads GVAHEINQPV…TTFAVNLKKA (210 aa). Phosphohistidine; by autocatalysis is present on H415.

Autophosphorylated.

Its subcellular location is the cell inner membrane. It carries out the reaction ATP + protein L-histidine = ADP + protein N-phospho-L-histidine.. Its function is as follows. Member of the two-component regulatory system DctB/DctD involved in the transport of C4-dicarboxylates. DctB functions as a membrane-associated protein kinase that phosphorylates DctD in response to environmental signals. The protein is C4-dicarboxylate transport sensor protein DctB (dctB) of Rhizobium meliloti (strain 1021) (Ensifer meliloti).